Consider the following 114-residue polypeptide: MRLLLLTFLGVCCFAAWVVEGVGTEVLQESICVSLRTQRLPVQKIKTYTIKEGAMRAVIFVTKRGLRICADPQAKWVKTAIKTVDGRASASKSKAETIPTQAQRSASTAVTLTG.

A signal peptide spans 1–21; that stretch reads MRLLLLTFLGVCCFAAWVVEG. A disulfide bond links Cys32 and Cys69. Positions 87 to 114 are disordered; that stretch reads RASASKSKAETIPTQAQRSASTAVTLTG. Positions 98–114 are enriched in polar residues; that stretch reads IPTQAQRSASTAVTLTG.

Belongs to the intercrine gamma family.

Its subcellular location is the secreted. Chemotactic activity for lymphocytes but not for monocytes or neutrophils. In thymus, mediates medullary accumulation of thymic dendritic cells and contributes to regulatoy T cell development, playing a role in self-tolerance establishment. This Rattus norvegicus (Rat) protein is Lymphotactin (Xcl1).